Here is a 501-residue protein sequence, read N- to C-terminus: uncharacterized protein (501 aa).

The protein belongs to the UbiD family.

This is an uncharacterized protein from Synechocystis sp. (strain ATCC 27184 / PCC 6803 / Kazusa).